A 259-amino-acid chain; its full sequence is Protein odd-skipped-related 1 (259 aa).

C2H2-type zinc fingers lie at residues 168–190 (FVCK…ERTH), 196–218 (YTCD…RYIH), and 224–246 (FKCQ…KTLH).

It belongs to the Odd C2H2-type zinc-finger protein family.

It localises to the nucleus. Its function is as follows. Transcriptional repressor. Required for pronephric kidney development. The chain is Protein odd-skipped-related 1 from Xenopus tropicalis (Western clawed frog).